We begin with the raw amino-acid sequence, 483 residues long: ATP synthase subunit beta (483 aa).

Residue 169–176 (GGAGVGKT) participates in ATP binding.

It belongs to the ATPase alpha/beta chains family. F-type ATPases have 2 components, CF(1) - the catalytic core - and CF(0) - the membrane proton channel. CF(1) has five subunits: alpha(3), beta(3), gamma(1), delta(1), epsilon(1). CF(0) has three main subunits: a(1), b(2) and c(9-12). The alpha and beta chains form an alternating ring which encloses part of the gamma chain. CF(1) is attached to CF(0) by a central stalk formed by the gamma and epsilon chains, while a peripheral stalk is formed by the delta and b chains.

The protein localises to the cell membrane. The catalysed reaction is ATP + H2O + 4 H(+)(in) = ADP + phosphate + 5 H(+)(out). Produces ATP from ADP in the presence of a proton gradient across the membrane. The catalytic sites are hosted primarily by the beta subunits. The sequence is that of ATP synthase subunit beta from Corynebacterium glutamicum (strain R).